Here is a 266-residue protein sequence, read N- to C-terminus: Early E1A protein (266 aa).

Positions 39-47 (PSLYELYDL) are interaction with RB1 in competition with E2F1. The interaction with UBE2I stretch occupies residues 75–145 (EGLFLPEPPV…AAAAADRERE (71 aa)). Positions 98 to 102 (PQLHP) match the PXLXP motif, interaction with host ZMYND11 motif. The short motif at 107–111 (LLCYE) is the LXCXE motif, interaction with host RB1 and TMEM173/STING element. Residues 159 to 179 (CKSCEHHRNSTGNTDLMCSLC) fold into a zinc finger. The disordered stretch occupies residues 195 to 226 (NEPEPNSTLDGDERPSPPKLGSAVPEGVIKPV). A PXDLS motif, CTBP-binding motif is present at residues 255–259 (PVDLS). The short motif at 261–265 (KRPRC) is the Nuclear localization signal element.

Belongs to the adenoviridae E1A protein family. In terms of assembly, interacts with host UBE2I; this interaction interferes with polySUMOylation. Interacts with host RB1; this interaction induces the aberrant dissociation of RB1-E2F1 complex thereby disrupting the activity of RB1 and activating E2F1-regulated genes. Interacts with host ATF7; the interaction enhances ATF7-mediated viral transactivation activity which requires the zinc binding domains of both proteins. Isoform early E1A 32 kDa protein and isoform early E1A 26 kDa protein interact (via N-terminus) with CUL1 and E3 ubiquitin ligase RBX1; these interactions inhibit RBX1-CUL1-dependent elongation reaction of ubiquitin chains and attenuate ubiquitination of SCF(FBXW7) target proteins. Interacts (via PXLXP motif) with host ZMYND11/BS69 (via MYND-type zinc finger); this interaction inhibits E1A mediated transactivation. Interacts with host EP300; this interaction stimulates the acetylation of RB1 by recruiting EP300 and RB1 into a multimeric-protein complex. Interacts with host CTBP1 and CTBP2; this interaction seems to potentiate viral replication. Interacts with host DCAF7. Interacts with host DYRK1A. Interacts with host KPNA4; this interaction allows E1A import into the host nucleus. Interacts with host EP400; this interaction stabilizes MYC. Interacts with host TBP protein; this interaction probably disrupts the TBP-TATA complex. Interacts (via LXCXE motif) with host TMEM173/STING; this interaction impairs the ability of TMEM173/STING to sense cytosolic DNA and promote the production of type I interferon (IFN-alpha and IFN-beta). Interacts (via C-terminus) with host ZBED1/hDREF (via C-terminus); the interaction is direct.

The protein resides in the host nucleus. Its function is as follows. Plays a role in viral genome replication by driving entry of quiescent cells into the cell cycle. Stimulation of progression from G1 to S phase allows the virus to efficiently use the cellular DNA replicating machinery to achieve viral genome replication. E1A protein has both transforming and trans-activating activities. Induces the disassembly of the E2F1 transcription factor from RB1 by direct competition for the same binding site on RB1, with subsequent transcriptional activation of E2F1-regulated S-phase genes and of the E2 region of the adenoviral genome. Release of E2F1 leads to the ARF-mediated inhibition of MDM2 and causes TP53/p53 to accumulate because it is not targeted for degradation by MDM2-mediated ubiquitination anymore. This increase in TP53, in turn, would arrest the cell proliferation and direct its death but this effect is counteracted by the viral protein E1B-55K. Inactivation of the ability of RB1 to arrest the cell cycle is critical for cellular transformation, uncontrolled cellular growth and proliferation induced by viral infection. Interaction with RBX1 and CUL1 inhibits ubiquitination of the proteins targeted by SCF(FBXW7) ubiquitin ligase complex, and may be linked to unregulated host cell proliferation. The tumorigenesis-restraining activity of E1A may be related to the disruption of the host CtBP-CtIP complex through the CtBP binding motif. Interaction with host TMEM173/STING impairs the ability of TMEM173/STING to sense cytosolic DNA and promote the production of type I interferon (IFN-alpha and IFN-beta). Promotes the sumoylation of host ZBED1/hDREF with SUMO1. This chain is Early E1A protein, found in Homo sapiens (Human).